The sequence spans 409 residues: Tyrosine--tRNA ligase (409 aa).

Y35 is a binding site for L-tyrosine. Positions 40–49 match the 'HIGH' region motif; sequence CTAESLHVGS. Positions 172 and 176 each coordinate L-tyrosine. Positions 232 to 236 match the 'KMSKS' region motif; the sequence is KMGKT. Residue K235 coordinates ATP. The 67-residue stretch at 343 to 409 folds into the S4 RNA-binding domain; it reads ISILDLVILS…KKKHIKVELI (67 aa).

This sequence belongs to the class-I aminoacyl-tRNA synthetase family. TyrS type 1 subfamily. In terms of assembly, homodimer.

Its subcellular location is the cytoplasm. It carries out the reaction tRNA(Tyr) + L-tyrosine + ATP = L-tyrosyl-tRNA(Tyr) + AMP + diphosphate + H(+). Catalyzes the attachment of tyrosine to tRNA(Tyr) in a two-step reaction: tyrosine is first activated by ATP to form Tyr-AMP and then transferred to the acceptor end of tRNA(Tyr). The protein is Tyrosine--tRNA ligase of Pelagibacter ubique (strain HTCC1062).